The chain runs to 531 residues: Coiled-coil domain-containing protein 9 (531 aa).

The disordered stretch occupies residues 40–531; the sequence is EDRKKAELEG…PGEAWPFESV (492 aa). A compositionally biased stretch (basic and acidic residues) spans 59–72; the sequence is RSVEKENVAVESEK. Residue S80 is modified to Phosphoserine. At T95 the chain carries Phosphothreonine. Residue R107 is modified to Omega-N-methylarginine. S111 is subject to Phosphoserine. Omega-N-methylarginine is present on residues R121, R128, and R130. 3 positions are modified to asymmetric dimethylarginine: R131, R133, and R135. The residue at position 137 (S137) is a Phosphoserine. Composition is skewed to basic and acidic residues over residues 148 to 185, 194 to 217, and 227 to 241; these read ISDR…REGV, FLDD…EESR, and DFER…ERQG. Residues 149–185 are a coiled coil; the sequence is SDRKSKEWEERRRQNIEKMNEEMEKIAEYERNQREGV. A Phosphoserine modification is found at S202. Residues S248 and S255 each carry the phosphoserine modification. 4 stretches are compositionally biased toward basic and acidic residues: residues 258-279, 289-302, 311-320, and 361-372; these read GRER…QERL, WRRE…DGMF, EPSHRYDDQA, and YSDHDDRWETKE. Phosphoserine is present on residues S376, S386, and S390. A compositionally biased stretch (low complexity) spans 386 to 395; it reads SPETSPKETP. Positions 396–406 are enriched in pro residues; that stretch reads MQPPEIPAPAH. Residues 411 to 446 are compositionally biased toward acidic residues; the sequence is DEGEENEGEEDEEWEDISEDEEEEEIEVEEGDEEEP. The residue at position 521 (S521) is a Phosphoserine.

Probable component of the exon junction complex (EJC); the association is RNA-dependent.

Its function is as follows. Probable component of the exon junction complex (EJC), a multiprotein complex that associates immediately upstream of the exon-exon junction on mRNAs and serves as a positional landmark for the intron exon structure of genes and directs post-transcriptional processes in the cytoplasm such as mRNA export, nonsense-mediated mRNA decay (NMD) or translation. The polypeptide is Coiled-coil domain-containing protein 9 (Homo sapiens (Human)).